Consider the following 366-residue polypeptide: Chorismate synthase (366 aa).

Positions 48 and 54 each coordinate NADP(+). FMN contacts are provided by residues 125–127, 238–239, Gly-278, 293–297, and Arg-319; these read RSS, NA, and KPTSS.

The protein belongs to the chorismate synthase family. Homotetramer. Requires FMNH2 as cofactor.

The enzyme catalyses 5-O-(1-carboxyvinyl)-3-phosphoshikimate = chorismate + phosphate. Its pathway is metabolic intermediate biosynthesis; chorismate biosynthesis; chorismate from D-erythrose 4-phosphate and phosphoenolpyruvate: step 7/7. Catalyzes the anti-1,4-elimination of the C-3 phosphate and the C-6 proR hydrogen from 5-enolpyruvylshikimate-3-phosphate (EPSP) to yield chorismate, which is the branch point compound that serves as the starting substrate for the three terminal pathways of aromatic amino acid biosynthesis. This reaction introduces a second double bond into the aromatic ring system. This is Chorismate synthase from Thiobacillus denitrificans (strain ATCC 25259 / T1).